Here is a 486-residue protein sequence, read N- to C-terminus: Cysteine--tRNA ligase (486 aa).

Cys27 serves as a coordination point for Zn(2+). Positions 29–39 (PTTYNFIHLGN) match the 'HIGH' region motif. Zn(2+)-binding residues include Cys207, His232, and Glu236. Positions 264-268 (KMSKS) match the 'KMSKS' region motif. Lys267 is an ATP binding site.

This sequence belongs to the class-I aminoacyl-tRNA synthetase family. As to quaternary structure, monomer. Zn(2+) serves as cofactor.

The protein localises to the cytoplasm. The enzyme catalyses tRNA(Cys) + L-cysteine + ATP = L-cysteinyl-tRNA(Cys) + AMP + diphosphate. This is Cysteine--tRNA ligase from Desulforamulus reducens (strain ATCC BAA-1160 / DSM 100696 / MI-1) (Desulfotomaculum reducens).